The following is a 151-amino-acid chain: MIDGVKVKKLMKHSDDRGFFAELVRDDENLLEHFGQASWSKSYPGVIKAFHYHEKQDDLWFFPTGHAQVVLYDLREDSKTKGETDVYYMGEDNPMLLLIPKGVAHGYRVLGETPLTIIYFTTMSYNPDQPDEKRIPWDDETIGFNWNTEFR.

This sequence to dTDP-4-dehydrorhamnose reductase.

It functions in the pathway spore coat biogenesis; spore coat polysaccharide biosynthesis. This chain is Spore coat polysaccharide biosynthesis protein SpsL (spsL), found in Bacillus subtilis (strain 168).